A 419-amino-acid chain; its full sequence is Transcription termination factor Rho (419 aa).

The 76-residue stretch at 48 to 123 folds into the Rho RNA-BD domain; the sequence is GFTCSGTLEI…VRLDSINGDH (76 aa). ATP-binding positions include 169 to 174, 181 to 186, and Arg-212; these read GKGQRA and KIGKTV.

The protein belongs to the Rho family. As to quaternary structure, homohexamer. The homohexamer assembles into an open ring structure.

Its function is as follows. Facilitates transcription termination by a mechanism that involves Rho binding to the nascent RNA, activation of Rho's RNA-dependent ATPase activity, and release of the mRNA from the DNA template. This is Transcription termination factor Rho from Neisseria gonorrhoeae.